Here is a 360-residue protein sequence, read N- to C-terminus: MTVITVSLEKKQYQVKIDRRLHQEIGQAVSLVWTPRRIALLTDSHVGPLYLTAVQQQLEMSGFEVLPLQVPAGESSKSLKTVGELIGKMAEKGFTRDDGLIALGGGVIGDLGGVVASLYMRGIALIQIATSLTAQVDSSVGGKTAINLSHTKNIAGTFYQPDLVLVDPTYLDTLADRDLVEGYAEVVKTSVLAGGSFFDLTGRIYGVTDIRDNAEELSTRAVAYKAQVVMADEKEAGQRQFLNFGHTIGHAIELLAHGELRHGEAVAIGMIAMSSRMTRDGLTPASLTAALRARLETVDLPTTSDLIGTPAFFKHMVNDKKNRGGRLNLVVLKDIGQPMIVQKAIVDMPDFINENEGNNR.

NAD(+) contacts are provided by residues 106 to 110 (GVIGD), 130 to 131 (TS), Lys143, and Lys152. Zn(2+) is bound by residues Glu185, His246, and His262.

This sequence belongs to the sugar phosphate cyclases superfamily. Dehydroquinate synthase family. Co(2+) serves as cofactor. The cofactor is Zn(2+). NAD(+) is required as a cofactor.

It is found in the cytoplasm. The catalysed reaction is 7-phospho-2-dehydro-3-deoxy-D-arabino-heptonate = 3-dehydroquinate + phosphate. It participates in metabolic intermediate biosynthesis; chorismate biosynthesis; chorismate from D-erythrose 4-phosphate and phosphoenolpyruvate: step 2/7. Functionally, catalyzes the conversion of 3-deoxy-D-arabino-heptulosonate 7-phosphate (DAHP) to dehydroquinate (DHQ). In Leuconostoc citreum (strain KM20), this protein is 3-dehydroquinate synthase.